Reading from the N-terminus, the 239-residue chain is Type II restriction enzyme Eco47II (239 aa).

It carries out the reaction Endonucleolytic cleavage of DNA to give specific double-stranded fragments with terminal 5'-phosphates.. Functionally, a P subtype restriction enzyme that recognizes the double-stranded sequence 5'-GGNCC-3'; the cleavage site is unknown. The protein is Type II restriction enzyme Eco47II of Escherichia coli.